The following is a 214-amino-acid chain: Thiamine-phosphate synthase (214 aa).

Residues 37–41 and Asn69 contribute to the 4-amino-2-methyl-5-(diphosphooxymethyl)pyrimidine site; that span reads QLRDK. Mg(2+)-binding residues include Asp70 and Asp89. Ser108 is a binding site for 4-amino-2-methyl-5-(diphosphooxymethyl)pyrimidine. Position 134–136 (134–136) interacts with 2-[(2R,5Z)-2-carboxy-4-methylthiazol-5(2H)-ylidene]ethyl phosphate; the sequence is TDS. 4-amino-2-methyl-5-(diphosphooxymethyl)pyrimidine is bound at residue Lys137. 2-[(2R,5Z)-2-carboxy-4-methylthiazol-5(2H)-ylidene]ethyl phosphate contacts are provided by residues Gly167 and 187-188; that span reads IS.

It belongs to the thiamine-phosphate synthase family. It depends on Mg(2+) as a cofactor.

It catalyses the reaction 2-[(2R,5Z)-2-carboxy-4-methylthiazol-5(2H)-ylidene]ethyl phosphate + 4-amino-2-methyl-5-(diphosphooxymethyl)pyrimidine + 2 H(+) = thiamine phosphate + CO2 + diphosphate. The enzyme catalyses 2-(2-carboxy-4-methylthiazol-5-yl)ethyl phosphate + 4-amino-2-methyl-5-(diphosphooxymethyl)pyrimidine + 2 H(+) = thiamine phosphate + CO2 + diphosphate. It carries out the reaction 4-methyl-5-(2-phosphooxyethyl)-thiazole + 4-amino-2-methyl-5-(diphosphooxymethyl)pyrimidine + H(+) = thiamine phosphate + diphosphate. Its pathway is cofactor biosynthesis; thiamine diphosphate biosynthesis; thiamine phosphate from 4-amino-2-methyl-5-diphosphomethylpyrimidine and 4-methyl-5-(2-phosphoethyl)-thiazole: step 1/1. Functionally, condenses 4-methyl-5-(beta-hydroxyethyl)thiazole monophosphate (THZ-P) and 2-methyl-4-amino-5-hydroxymethyl pyrimidine pyrophosphate (HMP-PP) to form thiamine monophosphate (TMP). The protein is Thiamine-phosphate synthase of Natronomonas pharaonis (strain ATCC 35678 / DSM 2160 / CIP 103997 / JCM 8858 / NBRC 14720 / NCIMB 2260 / Gabara) (Halobacterium pharaonis).